Here is a 238-residue protein sequence, read N- to C-terminus: Carboxymethylenebutenolidase (238 aa).

Residues Cys123, Asp171, and His201 contribute to the active site.

Belongs to the dienelactone hydrolase family. Monomer.

It carries out the reaction 2-(5-oxo-2,5-dihydrofuran-2-ylidene)acetate + H2O = 4-oxohex-2-enedioate + H(+). It functions in the pathway aromatic compound metabolism; 3-chlorocatechol degradation. Its function is as follows. Ring cleavage of cyclic ester dienelactone to produce maleylacetate. The polypeptide is Carboxymethylenebutenolidase (tcbE) (Pseudomonas sp. (strain P51)).